Reading from the N-terminus, the 66-residue chain is Ocellatin-PT1 (66 aa).

Residues 1 to 22 (MAFLKKSLFLVLFLGLVSLSIC) form the signal peptide. A propeptide spanning residues 23-39 (DEEKRQDEDDDDDDDEE) is cleaved from the precursor. Val-66 carries the post-translational modification Valine amide.

In terms of tissue distribution, expressed by the skin glands.

The protein resides in the secreted. Has antibacterial activity against Gram-negative bacterium E.coli ATCC 25922 (MIC=300 uM) but not against S.pneumoniae ATCC 700603, S.choleraesuis ATCC 14028 or Gram-positive bacterium S.aureus ATCC 29313. Shows virtually no hemolytic activity and no cytotoxicity. The protein is Ocellatin-PT1 of Leptodactylus pustulatus (Ceara white-lipped frog).